The primary structure comprises 737 residues: Alpha-adducin (737 aa).

N-acetylmethionine is present on M1. The disordered stretch occupies residues M1–K21. A Phosphoserine modification is found at S12. S59 carries the phosphoserine; by PKA modification. S64 bears the Phosphoserine mark. T331 is subject to Phosphothreonine. Residues S334, S353, S355, S358, and S366 each carry the phosphoserine modification. S408 carries the phosphoserine; by PKA modification. The span at Y419 to C430 shows a compositional bias: polar residues. Disordered stretches follow at residues Y419–V490 and R576–S737. S427 bears the Phosphoserine mark. The residue at position 429 (T429) is a Phosphothreonine. A Phosphoserine modification is found at S431. S436 is modified (phosphoserine; by PKA). T445 is modified (phosphothreonine; by ROCK2). Phosphoserine is present on residues S464 and S465. T480 bears the Phosphothreonine; by ROCK2 mark. S481 bears the Phosphoserine; by PKA mark. Positions R576–P601 are enriched in basic and acidic residues. Phosphoserine occurs at positions 586, 600, and 613. Pro residues predominate over residues P602–T614. T614 is subject to Phosphothreonine. Residues S678, S707, S710, and S714 each carry the phosphoserine modification. A compositionally biased stretch (low complexity) spans P687–S714. A compositionally biased stretch (basic residues) spans P715–S737. Residue S716 is modified to Phosphoserine; by PKC. Positions K717 to K734 are interaction with calmodulin. Residue S726 is modified to Phosphoserine; by PKA and PKC.

Belongs to the aldolase class II family. Adducin subfamily. In terms of assembly, heterodimer of an alpha and a beta subunit or an alpha and a gamma subunit.

It localises to the cytoplasm. The protein localises to the cytoskeleton. It is found in the cell membrane. Its function is as follows. Membrane-cytoskeleton-associated protein that promotes the assembly of the spectrin-actin network. Binds to calmodulin. This is Alpha-adducin (ADD1) from Pongo abelii (Sumatran orangutan).